The chain runs to 345 residues: Molybdate/tungstate import ATP-binding protein WtpC (345 aa).

The region spanning 2 to 231 (LKVESISKDY…PKSEEVARFL (230 aa)) is the ABC transporter domain. 33-40 (GPSGSGKT) is a binding site for ATP. In terms of domain architecture, Mop spans 280–345 (KTSARNVFKA…FKASAIHVFP (66 aa)).

It belongs to the ABC transporter superfamily. Sulfate/tungstate importer (TC 3.A.1.6) family. In terms of assembly, the complex is composed of two ATP-binding proteins (WtpC), two transmembrane proteins (WtpB) and a solute-binding protein (WtpA).

It localises to the cell membrane. The enzyme catalyses tungstate(in) + ATP + H2O = tungstate(out) + ADP + phosphate + H(+). Part of the ABC transporter complex WtpABC involved in molybdate/tungstate import. Responsible for energy coupling to the transport system. This chain is Molybdate/tungstate import ATP-binding protein WtpC (wtpC), found in Pyrococcus horikoshii (strain ATCC 700860 / DSM 12428 / JCM 9974 / NBRC 100139 / OT-3).